The sequence spans 399 residues: Putative cytochrome P450 133B2 (399 aa).

C348 is a heme binding site.

It belongs to the cytochrome P450 family. The cofactor is heme.

In Xylella fastidiosa (strain Temecula1 / ATCC 700964), this protein is Putative cytochrome P450 133B2 (cyp133B2).